Here is a 652-residue protein sequence, read N- to C-terminus: Small ribosomal subunit protein mS39 (652 aa).

The transit peptide at 1-37 (MYLSRQLRLLPRANIACSLSSSGAHYTTAAPAEDAPI) directs the protein to the mitochondrion. 5 PPR repeats span residues 129 to 163 (DSVV…GNPI), 225 to 259 (TPQS…QVQL), 260 to 299 (DTNT…KLRP), 300 to 338 (NLGT…GVNP), and 547 to 581 (TGQM…QHRI).

This sequence belongs to the mitochondrion-specific ribosomal protein mS39 family.

It localises to the mitochondrion. Mitochondrial protein that may have a role in mitochondrial translation. Essential for larval development. This chain is Small ribosomal subunit protein mS39, found in Drosophila melanogaster (Fruit fly).